Consider the following 121-residue polypeptide: MEAEVDKLELMFQKAESDLDYIQYRLEYEIKTNHPDSASEKNPVTLLKELSVIKSRYQTLYARFKPVAVEQKESKSRICATVKKTMNMIQKLQKQTDLELSPLTKEEKTAAEQFKFHMPDL.

S101 bears the Phosphoserine mark.

It belongs to the SKA2 family. In terms of assembly, component of the SKA1 complex, composed of SKA1, SKA2 and SKA3. Forms a heterodimer with SKA1; the heterodimer interacting with SKA3. The core SKA1 complex is composed of 2 SKA1-SKA2 heterodimers, each heterodimer interacting with a molecule of the SKA3 homodimer. The core SKA1 complex associates with microtubules and forms oligomeric assemblies. Interacts directly with SKA1. Binds directly to microtubules; but with a much lower affinity than SKA1. May interact with NR3C1; the relevance of such interaction remains unclear in vivo.

The protein resides in the cytoplasm. It localises to the cytoskeleton. It is found in the spindle. The protein localises to the chromosome. Its subcellular location is the centromere. The protein resides in the kinetochore. In terms of biological role, component of the SKA1 complex, a microtubule-binding subcomplex of the outer kinetochore that is essential for proper chromosome segregation. Required for timely anaphase onset during mitosis, when chromosomes undergo bipolar attachment on spindle microtubules leading to silencing of the spindle checkpoint. The SKA1 complex is a direct component of the kinetochore-microtubule interface and directly associates with microtubules as oligomeric assemblies. The complex facilitates the processive movement of microspheres along a microtubule in a depolymerization-coupled manner. In the complex, it is required for SKA1 localization. Affinity for microtubules is synergistically enhanced in the presence of the ndc-80 complex and may allow the ndc-80 complex to track depolymerizing microtubules. The protein is Spindle and kinetochore-associated protein 2 (SKA2) of Homo sapiens (Human).